Here is a 624-residue protein sequence, read N- to C-terminus: MYKYLMEINSIEDFKKLNSNEIKVLAEEIRHFLIESVSKTGGHLASNLGVVELTLALHQAFNSPEDKIIWDVGHQAYVHKILTGRRDQFSTLRQYKGLSGFPKRYESEHDQFDTGHSSTSISAAMGLATARDLNKDKYKVIAVIGDGAMTGGMAFEALNHIGQSQKDIIVILNDNEMSISPNVGGLSNYLNKIRTAPIYSKVKDDVEYLISNIPAIGKSVMKTAEKAKDSIKYFFVPGVLFEELGFTYIGPVDGHNYHSLYDVMNRTKNIKGPVLLHVMTTKGKGYTLAEKHPDKYHGVNSFHIETGEPISCNENLSYSEIAGKTLVECAAEDEKIVAITAAMPSGTGLNNFAKKHPERFFDVGIAEQHAATFAAGLAANGFKPFFAVYSTFFQRAYDQVIHDACIQDLPVTYLIDRAGLVGNDGETHHGSLDISFLSCIPNLTFMAPKDGIELSEMVRFAAKHNGPVAIRYPRGHSNMDSQENFSPLALGKGEITYHSGNDVLILALGTFNKMGLEICKDLEENNIFSTLMNPRFIKPMDEELIVEMVQKHKIIYTIEDNSKIGGFGTLVQVLLNDNQILKPVKVCALPDRFIEHGNVEDLYEELGLTKKQIVDQIKKEFSDL.

Residues H74 and 115–117 (GHS) contribute to the thiamine diphosphate site. A Mg(2+)-binding site is contributed by D146. Residues 147-148 (GA), N175, Y286, and E367 each bind thiamine diphosphate. Residue N175 participates in Mg(2+) binding.

The protein belongs to the transketolase family. DXPS subfamily. In terms of assembly, homodimer. Mg(2+) serves as cofactor. Thiamine diphosphate is required as a cofactor.

It catalyses the reaction D-glyceraldehyde 3-phosphate + pyruvate + H(+) = 1-deoxy-D-xylulose 5-phosphate + CO2. It functions in the pathway metabolic intermediate biosynthesis; 1-deoxy-D-xylulose 5-phosphate biosynthesis; 1-deoxy-D-xylulose 5-phosphate from D-glyceraldehyde 3-phosphate and pyruvate: step 1/1. Catalyzes the acyloin condensation reaction between C atoms 2 and 3 of pyruvate and glyceraldehyde 3-phosphate to yield 1-deoxy-D-xylulose-5-phosphate (DXP). This Alkaliphilus oremlandii (strain OhILAs) (Clostridium oremlandii (strain OhILAs)) protein is 1-deoxy-D-xylulose-5-phosphate synthase.